Consider the following 442-residue polypeptide: tRNA modification GTPase MnmE (442 aa).

Arg22, Glu79, and Lys118 together coordinate (6S)-5-formyl-5,6,7,8-tetrahydrofolate. The TrmE-type G domain occupies 215-365; sequence EIPIAIVGRP…LEKAILFEYQ (151 aa). Residue Asn225 participates in K(+) binding. GTP is bound by residues 225 to 230, 244 to 250, and 269 to 272; these read NVGKSS, TNIEGTT, and DTAG. Residue Ser229 participates in Mg(2+) binding. Residues Thr244, Ile246, and Thr249 each contribute to the K(+) site. Thr250 is a binding site for Mg(2+). Lys442 lines the (6S)-5-formyl-5,6,7,8-tetrahydrofolate pocket.

Belongs to the TRAFAC class TrmE-Era-EngA-EngB-Septin-like GTPase superfamily. TrmE GTPase family. Homodimer. Heterotetramer of two MnmE and two MnmG subunits. K(+) serves as cofactor.

Its subcellular location is the cytoplasm. Its function is as follows. Exhibits a very high intrinsic GTPase hydrolysis rate. Involved in the addition of a carboxymethylaminomethyl (cmnm) group at the wobble position (U34) of certain tRNAs, forming tRNA-cmnm(5)s(2)U34. The polypeptide is tRNA modification GTPase MnmE (Mycoplasmopsis pulmonis (strain UAB CTIP) (Mycoplasma pulmonis)).